The primary structure comprises 89 residues: uncharacterized protein (89 aa).

2 consecutive transmembrane segments (helical) span residues 1–21 (MFLA…ISLI) and 28–48 (GISL…TIAA).

The protein resides in the cell membrane. This is an uncharacterized protein from Methanocaldococcus jannaschii (strain ATCC 43067 / DSM 2661 / JAL-1 / JCM 10045 / NBRC 100440) (Methanococcus jannaschii).